Reading from the N-terminus, the 1607-residue chain is Laminin subunit gamma-1 (1607 aa).

Residues 1–33 form the signal peptide; the sequence is MTGGGRAALALQPRGRLWPLLAVLAAVAGCVRA. The Laminin N-terminal domain maps to 44–283; it reads RPQRCMPEFV…AISDFAVGGR (240 aa). Residues asparagine 58 and asparagine 132 are each glycosylated (N-linked (GlcNAc...) asparagine). Cystine bridges form between cysteine 284–cysteine 293, cysteine 286–cysteine 303, cysteine 305–cysteine 314, cysteine 340–cysteine 349, cysteine 342–cysteine 365, cysteine 368–cysteine 377, cysteine 380–cysteine 393, cysteine 396–cysteine 408, cysteine 398–cysteine 414, cysteine 416–cysteine 425, cysteine 428–cysteine 440, cysteine 443–cysteine 454, cysteine 445–cysteine 461, cysteine 463–cysteine 472, and cysteine 475–cysteine 490. 4 Laminin EGF-like domains span residues 284-339, 340-395, 396-442, and 443-492; these read CKCN…ESLP, CDCN…ACSP, CHCS…GCRP, and CSCD…GCTP. The 10-residue stretch at 493–502 folds into the Laminin EGF-like 5; first part domain; it reads CFCFGHSSVC. The region spanning 512–687 is the Laminin IV type A domain; it reads DISSTFQIDE…PGVPATWVES (176 aa). N-linked (GlcNAc...) asparagine glycans are attached at residues asparagine 574 and asparagine 648. The 34-residue stretch at 688 to 721 folds into the Laminin EGF-like 5; second part domain; the sequence is CTCPVGYGGQFCETCLPGYRRETPSLGPYSPCVL. 24 cysteine pairs are disulfide-bonded: cysteine 722–cysteine 731, cysteine 724–cysteine 738, cysteine 740–cysteine 749, cysteine 752–cysteine 768, cysteine 771–cysteine 779, cysteine 773–cysteine 790, cysteine 793–cysteine 802, cysteine 805–cysteine 823, cysteine 826–cysteine 840, cysteine 828–cysteine 847, cysteine 850–cysteine 859, cysteine 862–cysteine 879, cysteine 882–cysteine 896, cysteine 884–cysteine 903, cysteine 905–cysteine 914, cysteine 917–cysteine 930, cysteine 933–cysteine 945, cysteine 935–cysteine 952, cysteine 954–cysteine 963, cysteine 966–cysteine 978, cysteine 981–cysteine 993, cysteine 983–cysteine 999, cysteine 1001–cysteine 1010, and cysteine 1013–cysteine 1026. Laminin EGF-like domains follow at residues 722 to 770 and 771 to 825; these read CTCN…DCQP and CPCP…LCRP. In terms of domain architecture, Laminin EGF-like 8; nidogen-binding spans 826-881; sequence CQCNDNIDPNAVGNCNRLTGECLKCIYNTAGFYCDRCKEGFFGNPLAPNPADKCKA. Laminin EGF-like domains lie at 882–932, 933–980, and 981–1028; these read CACN…GCER, CDCH…GCKP, and CDCH…GCQE. 2 N-linked (GlcNAc...) asparagine glycosylation sites follow: asparagine 1020 and asparagine 1105. The tract at residues 1029–1607 is domain II and I; sequence CPACYRLVKD…CFNTPSIEKP (579 aa). The stretch at 1034–1594 forms a coiled coil; that stretch reads RLVKDKAAEH…HNLEDIKKTL (561 aa). A Phosphoserine modification is found at serine 1147. Residues asparagine 1159, asparagine 1173, asparagine 1203, asparagine 1221, asparagine 1239, asparagine 1378, asparagine 1393, and asparagine 1437 are each glycosylated (N-linked (GlcNAc...) asparagine). The residue at position 1491 (serine 1491) is a Phosphoserine.

In terms of assembly, laminin is a complex glycoprotein, consisting of three different polypeptide chains (alpha, beta, gamma), which are bound to each other by disulfide bonds into a cross-shaped molecule comprising one long and three short arms with globules at each end. Gamma-1 is a subunit of laminin-1 (laminin-111 or EHS laminin), laminin-2 (laminin-211 or merosin), laminin-3 (laminin-121 or S-laminin), laminin-4 (laminin-221 or S-merosin), laminin-6 (laminin-311 or K-laminin), laminin-7 (laminin-321 or KS-laminin), laminin-8 (laminin-411), laminin-9 (laminin-421), laminin-10 (laminin-511) and laminin-11 (laminin-521). Interacts with SVEP1. As to expression, found in the basement membranes (major component).

The protein resides in the secreted. The protein localises to the extracellular space. It is found in the extracellular matrix. It localises to the basement membrane. In terms of biological role, binding to cells via a high affinity receptor, laminin is thought to mediate the attachment, migration and organization of cells into tissues during embryonic development by interacting with other extracellular matrix components. This chain is Laminin subunit gamma-1 (Lamc1), found in Mus musculus (Mouse).